The following is a 479-amino-acid chain: FAD-dependent monooxygenase atmM (479 aa).

Residues 10–30 (IIVGGSVAGLTLAHCLQRAGI) traverse the membrane as a helical segment. FAD-binding residues include E36, G50, R109, D309, and A322. Residues 445-465 (WILVLLVIVVSFGLHSPELVI) form a helical membrane-spanning segment.

Belongs to the paxM FAD-dependent monooxygenase family. It depends on FAD as a cofactor.

It is found in the membrane. The protein operates within secondary metabolite biosynthesis. FAD-dependent monooxygenase; part of the ATM1 gene cluster that mediates the biosynthesis of aflatrem, a tremorgenic mycotoxin with acute neurotoxic effects. Synthesis of geranylgeranyl diphosphate (GGPP) by AtmG (a GGPP synthase) precedes condensation of GGPP with indole 3-glycerol phosphate, followed by epoxidation and cyclization by AtmM (a FAD-dependent monooxygenase) and AtmC (a prenyltransferase) to produce paspaline. AtmB is also essential for paspaline production, but its exact role has not been identified yet. AtmP, a cytochrome P450 monooxygenase, subsequently converts paspaline to 13-desoxypaxilline via PC-M6 by removal of the C-30 methyl group and oxidation at C-10. AtmQ, a cytochrome P450 monooxygenase, then catalyzes the oxidation of 13-desoxypaxilline, first at C-7 to produce paspalicine and then at C-13 to form paspalinine. Finally, AtmD prenylates paspalinine to form aflatrem. The polypeptide is FAD-dependent monooxygenase atmM (Aspergillus flavus).